The chain runs to 635 residues: Protein phosphatase PP2A regulatory subunit A (635 aa).

Low complexity predominate over residues 1–27 (MSGARSTTAGAVPSAATTSTTSTTSNS). Positions 1–33 (MSGARSTTAGAVPSAATTSTTSTTSNSKDSDSN) are disordered. HEAT repeat units lie at residues 34–72 (ESLY…GPER), 73–111 (TRNE…GGPQ), 112–150 (YATI…SQEQ), 151–189 (LFSD…KDDS), 190–228 (LRKN…TQNL), 229–273 (GLST…NAKG), 274–316 (DESH…SNQA), 317–356 (YIDE…DPSI), 357–395 (ILNK…NKDQ), 396–434 (VINN…GIEL), 435–473 (LSDS…GMQF), 474–512 (FDQQ…GSDW), 513–553 (CRDE…SLDV), 554–598 (VTEQ…YDAL), and 599–632 (IKNT…CQEL).

This sequence belongs to the phosphatase 2A regulatory subunit A family. As to quaternary structure, PP2A exists in several trimeric forms, all of which consist of a core composed of a catalytic subunit associated with a 65 kDa regulatory subunit (PR65) (subunit A). The core complex associates with a third, variable subunit (subunit B), which confers distinct properties to the holoenzyme.

Its function is as follows. Phosphatase 2A affects a variety of biological processes in the cell such as transcription, cell cycle progression and cellular morphogenesis, and provides an initial identification of critical substrates for this phosphatase. The regulatory subunit may direct the catalytic subunit to distinct, albeit overlapping, subsets of substrates. The chain is Protein phosphatase PP2A regulatory subunit A (TPD3) from Saccharomyces cerevisiae (strain ATCC 204508 / S288c) (Baker's yeast).